Reading from the N-terminus, the 510-residue chain is Conditioned medium factor receptor 1 (510 aa).

Over 1–36 the chain is Cytoplasmic; the sequence is MDSKYIQKTLSAITEQITKNAAVQKVLDNKFVKEHK. The chain crosses the membrane as a helical span at residues 37-55; the sequence is YAAAAATVGLGVVAATTIV. Residues 56–510 lie on the Extracellular side of the membrane; sequence KAVNCEGKRY…QGKKQIKKLD (455 aa).

It localises to the membrane. In terms of biological role, receptor for cmfA, that appears to mediate the G-independent cmfA signal transduction. The polypeptide is Conditioned medium factor receptor 1 (cmfB) (Dictyostelium discoideum (Social amoeba)).